The chain runs to 841 residues: Axin-1 (841 aa).

The disordered stretch occupies residues 1–78; it reads MNIQGKGFPL…GYEPEGSASP (78 aa). Positions 44-61 are enriched in polar residues; sequence FYSSKSDAVRNETSTATP. In terms of domain architecture, RGS spans 88-211; that stretch reads SLHSLLDDQD…LKSDIYLEYT (124 aa). The interval 217 to 269 is disordered; sequence SPKIYSDPSSGSGTGKGLPGYLPTLNEDEEWKCDQDTEPEASRDSAPSSRLTQ. The segment covering 248-259 has biased composition (basic and acidic residues); the sequence is KCDQDTEPEASR. The segment at 348–433 is interaction with GSK3B; the sequence is LRKQHRREMQ…DADISSGPSV (86 aa). Residues 434-508 form an interaction with beta-catenin region; the sequence is ISHKMPSAQP…RSPESGHLGK (75 aa). Disordered regions lie at residues 482–527, 613–635, and 727–756; these read KTPG…TTKS, NIKK…SPED, and RRLE…SGAS. The span at 727–736 shows a compositional bias: basic and acidic residues; the sequence is RRLEEEEKRA. Positions 759 to 841 constitute a DIX domain; sequence CENIVVAYYF…KIIGKVEKID (83 aa).

Homodimer. Post-translationally, ADP-ribosylated by tankyrase TNKS and TNKS2. Poly-ADP-ribosylated protein is recognized by RNF146, followed by ubiquitination at 'Lys-48' and subsequent activation of the Wnt signaling pathway. In terms of processing, ubiquitinated by RNF146 when poly-ADP-ribosylated, leading to its degradation and subsequent activation of the Wnt signaling pathway.

The protein resides in the cytoplasm. It localises to the nucleus. The protein localises to the membrane. Its subcellular location is the cell membrane. Its function is as follows. Component of the beta-catenin destruction complex required for regulating CTNNB1 levels through phosphorylation and ubiquitination, and modulating Wnt-signaling. Controls dorsoventral patterning via two opposing effects; down-regulates CTNNB1 to inhibit the Wnt signaling pathway and ventralize embryos, but also dorsalizes embryos by activating a Wnt-independent JNK signaling pathway. This Gallus gallus (Chicken) protein is Axin-1 (AXIN1).